We begin with the raw amino-acid sequence, 466 residues long: tRNA-2-methylthio-N(6)-dimethylallyladenosine synthase (466 aa).

An MTTase N-terminal domain is found at 21-137 (GSYWITTFGC…LEDLLNQVDN (117 aa)). [4Fe-4S] cluster contacts are provided by Cys30, Cys66, Cys100, Cys172, Cys176, and Cys179. One can recognise a Radical SAM core domain in the interval 158–395 (RDSNICAWVN…NLLVEQTAKD (238 aa)). Positions 398-466 (TRYHNQIVEV…AFSLTGSPIQ (69 aa)) constitute a TRAM domain.

The protein belongs to the methylthiotransferase family. MiaB subfamily. Monomer. [4Fe-4S] cluster serves as cofactor.

The protein localises to the cytoplasm. It carries out the reaction N(6)-dimethylallyladenosine(37) in tRNA + (sulfur carrier)-SH + AH2 + 2 S-adenosyl-L-methionine = 2-methylsulfanyl-N(6)-dimethylallyladenosine(37) in tRNA + (sulfur carrier)-H + 5'-deoxyadenosine + L-methionine + A + S-adenosyl-L-homocysteine + 2 H(+). Functionally, catalyzes the methylthiolation of N6-(dimethylallyl)adenosine (i(6)A), leading to the formation of 2-methylthio-N6-(dimethylallyl)adenosine (ms(2)i(6)A) at position 37 in tRNAs that read codons beginning with uridine. This is tRNA-2-methylthio-N(6)-dimethylallyladenosine synthase from Prochlorococcus marinus (strain SARG / CCMP1375 / SS120).